A 313-amino-acid chain; its full sequence is Pseudouridine-5'-phosphate glycosidase (313 aa).

Residue glutamate 26 is the Proton donor of the active site. 2 residues coordinate substrate: lysine 87 and alanine 107. Aspartate 139 contacts Mn(2+). A substrate-binding site is contributed by 141-143 (SAD). Catalysis depends on lysine 160, which acts as the Nucleophile.

The protein belongs to the pseudouridine-5'-phosphate glycosidase family. As to quaternary structure, homotrimer. The cofactor is Mn(2+).

The enzyme catalyses D-ribose 5-phosphate + uracil = psi-UMP + H2O. Its function is as follows. Catalyzes the reversible cleavage of pseudouridine 5'-phosphate (PsiMP) to ribose 5-phosphate and uracil. Functions biologically in the cleavage direction, as part of a pseudouridine degradation pathway. This is Pseudouridine-5'-phosphate glycosidase from Corynebacterium aurimucosum (strain ATCC 700975 / DSM 44827 / CIP 107346 / CN-1) (Corynebacterium nigricans).